Consider the following 694-residue polypeptide: DNA polymerase eta (694 aa).

In terms of domain architecture, UmuC spans 9 to 258 (VALVDMDCFF…MPIRKIRSLG (250 aa)). Mg(2+)-binding residues include Asp13 and Met14. Positions 13 and 14 each coordinate Mn(2+). Arg61 contributes to the a 2'-deoxyribonucleoside 5'-triphosphate binding site. Positions 115 and 116 each coordinate Mg(2+). Residues Asp115 and Glu116 each coordinate Mn(2+). Residue Glu116 is part of the active site. The segment at 565-598 (DSGPDDGAVKPVSSKAVSTEMNVAGDSPNVLDSP) is disordered. A UBZ3-type zinc finger spans residues 609–643 (ATEDQVLCEKCDSLVPVWDMPEHTDYHFALELQKS). Zn(2+)-binding residues include Cys616, Cys619, His631, and His635. The disordered stretch occupies residues 651-694 (KPQAIPAVSPQGKRNPKSPSASSSKRLRPHGMQTLESFFKPLTH). Residues Lys663, Lys667, and Lys675 each participate in a glycyl lysine isopeptide (Lys-Gly) (interchain with G-Cter in ubiquitin) cross-link. The PIP-box signature appears at 682-689 (MQTLESFF). Lys690 is covalently cross-linked (Glycyl lysine isopeptide (Lys-Gly) (interchain with G-Cter in ubiquitin)).

Belongs to the DNA polymerase type-Y family. In terms of assembly, interacts with REV1. Interacts with monoubiquitinated PCNA, but not unmodified PCNA. Interacts with POLI; this interaction targets POLI to the replication machinery. Interacts with PALB2 and BRCA2; the interactions are direct and are required to sustain the recruitment of POLH at blocked replication forks and to stimulate POLH-dependent DNA synthesis on D loop substrates. Interacts (via C-terminus) with TRAIP. Interacts with ubiquitin. Interacts with POLDIP2. Mg(2+) serves as cofactor. The cofactor is Mn(2+). Post-translationally, monoubiquitinated by RCHY1/PIRH2. Ubiquitination depends on integrity of the UBZ3-type zinc finger domain and is enhanced by TRAIP. Ubiquitination inhibits the ability of PolH to interact with PCNA and to bypass UV-induced lesions. Ubiquitous.

The protein localises to the nucleus. The catalysed reaction is DNA(n) + a 2'-deoxyribonucleoside 5'-triphosphate = DNA(n+1) + diphosphate. With respect to regulation, the enzyme in complex with the DNA substrate binds a third divalent metal cation. The binding of this third divalent cation, which is coordinated by water molecules and two oxygen atoms from DNA and dNTP, is essential for catalyzing the DNA synthesis. DNA polymerase specifically involved in the DNA repair by translesion synthesis (TLS). Due to low processivity on both damaged and normal DNA, cooperates with the heterotetrameric (REV3L, REV7, POLD2 and POLD3) POLZ complex for complete bypass of DNA lesions. Inserts one or 2 nucleotide(s) opposite the lesion, the primer is further extended by the tetrameric POLZ complex. In the case of 1,2-intrastrand d(GpG)-cisplatin cross-link, inserts dCTP opposite the 3' guanine. Particularly important for the repair of UV-induced pyrimidine dimers. Although inserts the correct base, may cause base transitions and transversions depending upon the context. May play a role in hypermutation at immunoglobulin genes. Forms a Schiff base with 5'-deoxyribose phosphate at abasic sites, but does not have any lyase activity, preventing the release of the 5'-deoxyribose phosphate (5'-dRP) residue. This covalent trapping of the enzyme by the 5'-dRP residue inhibits its DNA synthetic activity during base excision repair, thereby avoiding high incidence of mutagenesis. Targets POLI to replication foci. In Mus musculus (Mouse), this protein is DNA polymerase eta (Polh).